Here is an 86-residue protein sequence, read N- to C-terminus: UPF0297 protein LCABL_08470 (86 aa).

It belongs to the UPF0297 family.

This chain is UPF0297 protein LCABL_08470, found in Lacticaseibacillus casei (strain BL23) (Lactobacillus casei).